Reading from the N-terminus, the 423-residue chain is Histidine--tRNA ligase (423 aa).

It belongs to the class-II aminoacyl-tRNA synthetase family. Homodimer.

It is found in the cytoplasm. The enzyme catalyses tRNA(His) + L-histidine + ATP = L-histidyl-tRNA(His) + AMP + diphosphate + H(+). This Haemophilus influenzae (strain 86-028NP) protein is Histidine--tRNA ligase.